A 175-amino-acid polypeptide reads, in one-letter code: tRNA (cytidine(56)-2'-O)-methyltransferase (175 aa).

Leu83 lines the S-adenosyl-L-methionine pocket.

It belongs to the aTrm56 family. Homodimer.

The protein localises to the cytoplasm. The enzyme catalyses cytidine(56) in tRNA + S-adenosyl-L-methionine = 2'-O-methylcytidine(56) in tRNA + S-adenosyl-L-homocysteine + H(+). In terms of biological role, specifically catalyzes the AdoMet-dependent 2'-O-ribose methylation of cytidine at position 56 in tRNAs. The protein is tRNA (cytidine(56)-2'-O)-methyltransferase of Methanosphaera stadtmanae (strain ATCC 43021 / DSM 3091 / JCM 11832 / MCB-3).